Reading from the N-terminus, the 224-residue chain is Pyridoxine/pyridoxamine 5'-phosphate oxidase (224 aa).

Residues 69 to 74, 83 to 84, Arg89, Lys90, and Gln112 each bind FMN; these read RHVLLK and FT. Residue Lys74 coordinates substrate. Substrate-binding residues include Tyr130, Arg134, and Ser138. FMN-binding positions include 148-149 and Trp194; that span reads QS. 200-202 provides a ligand contact to substrate; it reads RMH. Arg204 lines the FMN pocket.

It belongs to the pyridoxamine 5'-phosphate oxidase family. As to quaternary structure, homodimer. The cofactor is FMN.

The enzyme catalyses pyridoxamine 5'-phosphate + O2 + H2O = pyridoxal 5'-phosphate + H2O2 + NH4(+). The catalysed reaction is pyridoxine 5'-phosphate + O2 = pyridoxal 5'-phosphate + H2O2. It participates in cofactor metabolism; pyridoxal 5'-phosphate salvage; pyridoxal 5'-phosphate from pyridoxamine 5'-phosphate: step 1/1. It functions in the pathway cofactor metabolism; pyridoxal 5'-phosphate salvage; pyridoxal 5'-phosphate from pyridoxine 5'-phosphate: step 1/1. Catalyzes the oxidation of either pyridoxine 5'-phosphate (PNP) or pyridoxamine 5'-phosphate (PMP) into pyridoxal 5'-phosphate (PLP). The polypeptide is Pyridoxine/pyridoxamine 5'-phosphate oxidase (Acidothermus cellulolyticus (strain ATCC 43068 / DSM 8971 / 11B)).